Consider the following 693-residue polypeptide: Testis-specific Y-encoded-like protein 2 (693 aa).

Disordered stretches follow at residues 1-56 and 104-125; these read MDRP…EAAQ and GYGE…EASG. A Glycyl lysine isopeptide (Lys-Gly) (interchain with G-Cter in SUMO2) cross-link involves residue K11. S18 and S20 each carry phosphoserine. Pro residues predominate over residues 23–44; it reads RDPPPPPPPPPLLRLPLPPPQQ. Residues K163 and K165 each participate in a glycyl lysine isopeptide (Lys-Gly) (interchain with G-Cter in SUMO2) cross-link. A disordered region spans residues 175–207; that stretch reads EDEDERESMRSSRRRRRRRRRKQRKVKRESRER. Residues 185–202 show a composition bias toward basic residues; that stretch reads SSRRRRRRRRRKQRKVKR. T340 is modified (phosphothreonine). Disordered stretches follow at residues 474–605 and 627–693; these read ENIC…DIEY and ISDE…GKTG. Residues 487 to 496 are compositionally biased toward polar residues; it reads VPNNETTDNN. Acidic residues predominate over residues 509-519; sequence ESADDNNENPE. Residues 531–542 are compositionally biased toward low complexity; it reads NPNNNENTYGNN. 2 stretches are compositionally biased toward acidic residues: residues 559-602 and 627-675; these read SDSD…DDRD and ISDE…DLED. 3 positions are modified to phosphoserine: S658, S668, and S671.

This sequence belongs to the nucleosome assembly protein (NAP) family. In terms of assembly, interacts with histones. Interacts with CASK. Part of a complex containing CASK, TBR1 and TSPYL2. In terms of processing, phosphorylation at Ser-20 and/or Thr-340 impairs function on cell proliferation. Ubiquitously expressed, with highest levels in brain, testis and heart, and lowest levels in liver and pancreas.

The protein resides in the nucleus. The protein localises to the cytoplasm. Part of the CASK/TBR1/TSPYL2 transcriptional complex which modulates gene expression in response to neuronal synaptic activity, probably by facilitating nucleosome assembly. May inhibit cell proliferation by inducing p53-dependent CDKN1A expression. This is Testis-specific Y-encoded-like protein 2 (TSPYL2) from Homo sapiens (Human).